The chain runs to 527 residues: UDP-glucuronosyltransferase 2A3 (527 aa).

Positions 1-23 are cleaved as a signal peptide; that stretch reads MRSEKSALVFLLLQLFCVGCGFC. Topologically, residues 24 to 486 are extracellular; it reads GKVLVWPCDM…AAHNLTWFQH (463 aa). N-linked (GlcNAc...) asparagine glycosylation is present at asparagine 313. The helical transmembrane segment at 487 to 507 threads the bilayer; it reads YSIDVIGFLLACVATAIFLFT. Topologically, residues 508–523 are cytoplasmic; sequence KCCLFSCQKFNKTRKI.

This sequence belongs to the UDP-glycosyltransferase family.

Its subcellular location is the membrane. The enzyme catalyses glucuronate acceptor + UDP-alpha-D-glucuronate = acceptor beta-D-glucuronoside + UDP + H(+). Functionally, UDP-glucuronosyltransferases catalyze phase II biotransformation reactions in which lipophilic substrates are conjugated with glucuronic acid to increase water solubility and enhance excretion. They are of major importance in the conjugation and subsequent elimination of potentially toxic xenobiotics and endogenous compounds. This Pongo abelii (Sumatran orangutan) protein is UDP-glucuronosyltransferase 2A3 (UGT2A3).